The sequence spans 470 residues: Monocarboxylate transporter 4 (470 aa).

Topologically, residues 1-17 are cytoplasmic; the sequence is MGGAVVDEGPTGIKAPD. The helical transmembrane segment at 18 to 38 threads the bilayer; that stretch reads GGWGWAVLFGCFIITGFSYAF. Topologically, residues 39-61 are extracellular; that stretch reads PKAVSVFFKELMHEFGIGYSDTA. A helical transmembrane segment spans residues 62-82; the sequence is WISSILLAMLYGTGPLCSVCV. Residues 83–84 are Cytoplasmic-facing; that stretch reads NR. A helical membrane pass occupies residues 85–105; the sequence is FGCRPVMLVGGLFASLGMVAA. Residues 106–109 lie on the Extracellular side of the membrane; sequence SFCR. A helical transmembrane segment spans residues 110-130; that stretch reads SIIQIYLTTGVITGLGLALNF. Topologically, residues 131–149 are cytoplasmic; sequence QPSLIMLNRYFNKRRPIAN. The chain crosses the membrane as a helical span at residues 150–170; the sequence is GLAAAGSPVFLCALSPLGQLL. Over 171-179 the chain is Extracellular; the sequence is QDHYGWRGG. A helical membrane pass occupies residues 180 to 200; sequence FLILGGLLLNCCVCAALMRPL. At 201–231 the chain is on the cytoplasmic side; that stretch reads VAPQVGGGTEPRGPQRPPQRLLDLSVFRDRG. A helical membrane pass occupies residues 232–252; the sequence is FLIYAVAASIMVLGLFVPPVF. Topologically, residues 253-267 are extracellular; the sequence is VVSYAKDMGVPDTKA. The helical transmembrane segment at 268–288 threads the bilayer; sequence AFLLTILGFIDIFARPTAGFI. Topologically, residues 289-298 are cytoplasmic; the sequence is TGLKKVRPYS. A helical transmembrane segment spans residues 299 to 319; sequence VYLFSFAMFFNGFTDLTGSTA. At 320–321 the chain is on the extracellular side; sequence TD. A helical membrane pass occupies residues 322-342; that stretch reads YGGLVVFCIFFGISYGMVGAL. Over 343-355 the chain is Cytoplasmic; it reads QFEVLMAIVGTQK. Residues 356–376 form a helical membrane-spanning segment; it reads FSSAIGLVLLLEAVAVLIGPP. Topologically, residues 377–391 are extracellular; sequence SGGKLLDATKVYKYV. A helical membrane pass occupies residues 392-412; the sequence is FILAGAEVLTSSLVLLLGNFF. Residues 413 to 470 lie on the Cytoplasmic side of the membrane; the sequence is CIGKRKRPEVTEPEEVASEEKLHKPPVDVGVDSREVEHFLKAEPEKNGEVVHTPETSV. Basolateral sorting signal regions lie at residues 429-446 and 446-470; these read ASEE…VDSR and REVE…ETSV. Phosphoserine is present on S430. Phosphothreonine is present on T465. A Phosphoserine modification is found at S469.

The protein belongs to the major facilitator superfamily. Monocarboxylate porter (TC 2.A.1.13) family. In terms of assembly, interacts with BSG; interaction mediates SLC16A3 targeting to the plasma membrane.

It localises to the cell membrane. Its subcellular location is the basolateral cell membrane. The enzyme catalyses (S)-lactate(in) + H(+)(in) = (S)-lactate(out) + H(+)(out). The catalysed reaction is pyruvate(out) + H(+)(out) = pyruvate(in) + H(+)(in). Its function is as follows. Proton-dependent transporter of monocarboxylates such as L-lactate and pyruvate. Plays a predominant role in the L-lactate efflux from highly glycolytic cells. This chain is Monocarboxylate transporter 4 (Slc16a3), found in Mus musculus (Mouse).